Here is a 117-residue protein sequence, read N- to C-terminus: Ig heavy chain V region 345 (117 aa).

Residues 1 to 19 (MNFGLRLIFLVLTLKGVKC) form the signal peptide. The segment at 20 to 49 (EVQLVESGGGLVKPGGSLKLSCAASGFAFS) is framework-1. Cys41 and Cys115 are oxidised to a cystine. Positions 50–54 (SYDMS) are complementarity-determining-1. Residues 55-68 (WVRQTPEKRLEWVA) are framework-2. The tract at residues 69-85 (YISSGGGSTYYPDTVKG) is complementarity-determining-2. The tract at residues 86–117 (RFTISRDNAKNTLYLQMSSLKSEDTAMYYCAR) is framework-3.

The polypeptide is Ig heavy chain V region 345 (Mus musculus (Mouse)).